We begin with the raw amino-acid sequence, 324 residues long: Phospho-N-acetylmuramoyl-pentapeptide-transferase (324 aa).

The next 10 membrane-spanning stretches (helical) occupy residues 5-25, 50-70, 77-97, 117-137, 147-167, 176-196, 203-223, 227-247, 250-270, and 302-322; these read VILF…PILI, GTPT…TIVM, ISPE…LGFL, LIGQ…YNFA, LSFD…VGGS, LDGL…ILAW, VAIF…FNAH, VFMG…IAIL, LEIL…SVIL, and VVVT…YIEV.

Belongs to the glycosyltransferase 4 family. MraY subfamily. Mg(2+) is required as a cofactor.

The protein localises to the cell membrane. The enzyme catalyses UDP-N-acetyl-alpha-D-muramoyl-L-alanyl-gamma-D-glutamyl-meso-2,6-diaminopimeloyl-D-alanyl-D-alanine + di-trans,octa-cis-undecaprenyl phosphate = di-trans,octa-cis-undecaprenyl diphospho-N-acetyl-alpha-D-muramoyl-L-alanyl-D-glutamyl-meso-2,6-diaminopimeloyl-D-alanyl-D-alanine + UMP. It functions in the pathway cell wall biogenesis; peptidoglycan biosynthesis. Functionally, catalyzes the initial step of the lipid cycle reactions in the biosynthesis of the cell wall peptidoglycan: transfers peptidoglycan precursor phospho-MurNAc-pentapeptide from UDP-MurNAc-pentapeptide onto the lipid carrier undecaprenyl phosphate, yielding undecaprenyl-pyrophosphoryl-MurNAc-pentapeptide, known as lipid I. The sequence is that of Phospho-N-acetylmuramoyl-pentapeptide-transferase from Bacillus subtilis (strain 168).